The chain runs to 451 residues: Chromosomal replication initiator protein DnaA 2 (451 aa).

The domain I, interacts with DnaA modulators stretch occupies residues 1–68 (MQAWEEFLKA…QQKFINGNNK (68 aa)). Residues 68 to 104 (KRIKIHLSVANTPQRAKKTKTANKEKDFKAPFELTFD) form a domain II region. Residues 105–326 (ELDPLCLFPY…KGLEALVLRL (222 aa)) are domain III, AAA+ region. Residues Gly-156, Gly-158, Lys-159, and Thr-160 each coordinate ATP. The domain IV, binds dsDNA stretch occupies residues 327-451 (HLDAKHSITA…CHIILKKLQG (125 aa)).

The protein belongs to the DnaA family. Oligomerizes as a right-handed, spiral filament on DNA at oriC.

Its subcellular location is the cytoplasm. Its function is as follows. Plays an essential role in the initiation and regulation of chromosomal replication. ATP-DnaA binds to the origin of replication (oriC) to initiate formation of the DNA replication initiation complex once per cell cycle. Binds the DnaA box (a 9 base pair repeat at the origin) and separates the double-stranded (ds)DNA. Forms a right-handed helical filament on oriC DNA; dsDNA binds to the exterior of the filament while single-stranded (ss)DNA is stabiized in the filament's interior. The ATP-DnaA-oriC complex binds and stabilizes one strand of the AT-rich DNA unwinding element (DUE), permitting loading of DNA polymerase. After initiation quickly degrades to an ADP-DnaA complex that is not apt for DNA replication. Binds acidic phospholipids. This is Chromosomal replication initiator protein DnaA 2 from Protochlamydia amoebophila (strain UWE25).